The sequence spans 564 residues: 5-hydroxytryptamine receptor 1 (564 aa).

A disordered region spans residues 1 to 26; that stretch reads MALSGQDWRRHQSHRQHRNHRTQGNH. Over residues 11–23 the composition is skewed to basic residues; that stretch reads HQSHRQHRNHRTQ. Residues 29–51 traverse the membrane as a helical segment; that stretch reads LISTATLTLFVLFLSSWIAYAAG. Tandem repeats lie at residues 89–90, 91–92, 93–94, 95–96, 97–98, 99–100, 101–102, 103–104, and 105–106. The tract at residues 89–106 is 9 X 2 AA tandem repeats of G-S; sequence GSGSGSGSGSGSGSGSGS. The helical transmembrane segment at 165 to 188 threads the bilayer; it reads VSIVLLIVILGTVVGNVLVCIAVC. Residues 189-198 are Cytoplasmic-facing; it reads MVRKLRRPCN. Residues 199-222 traverse the membrane as a helical segment; it reads YLLVSLALSDLCVALLVMPMALLY. Residues 223–236 are Extracellular-facing; sequence EVLEKWNFGPLLCD. An intrachain disulfide couples C235 to C314. The helical transmembrane segment at 237-258 threads the bilayer; sequence IWVSFDVLCCTASILNLCAISV. Positions 238–247 are agonist binding; that stretch reads WVSFDVLCCT. Ergotamine contacts are provided by D242 and T247. Residues 259–261 carry the DRY motif; important for ligand-induced conformation changes motif; it reads DRY. Residues 259-278 are Cytoplasmic-facing; it reads DRYLAITKPLEYGVKRTPRR. The chain crosses the membrane as a helical span at residues 279–302; it reads MMLCVGIVWLAAACISLPPLLILG. Residues 303 to 330 lie on the Extracellular side of the membrane; it reads NEHEDEEGQPICTVCQNFAYQIYATLGS. A helical membrane pass occupies residues 331–353; the sequence is FYIPLSVMLFVYYQIFRAARRIV. The Cytoplasmic portion of the chain corresponds to 354–454; that stretch reads LEEKRAQTHL…QLAKEKKAST (101 aa). Positions 367–396 are disordered; the sequence is LNGTGSPSAPQAPPLGHTELASSGNGQRHS. Polar residues predominate over residues 386–396; it reads LASSGNGQRHS. The chain crosses the membrane as a helical span at residues 455-476; that stretch reads TLGIIMSAFTVCWLPFFILALI. The Extracellular portion of the chain corresponds to 477–487; it reads RPFETMHVPAS. Residues 488 to 510 form a helical membrane-spanning segment; the sequence is LSSLFLWLGYANSLLNPIIYATL. Positions 503-507 match the NPxxY motif; important for ligand-induced conformation changes and signaling motif; sequence NPIIY. Topologically, residues 511–564 are cytoplasmic; sequence NRDFRKPFQEILYFRCSSLNTMMRENYYQDQYGEPPSQRVMLGDERHGARESFL.

It belongs to the G-protein coupled receptor 1 family. 5-hydroxytryptamine receptor subfamily. In terms of tissue distribution, expressed predominantly in adult heads.

Its subcellular location is the cell membrane. Functionally, G-protein coupled receptor for 5-hydroxytryptamine (serotonin). Also functions as a receptor for various alkaloids. Ligand binding causes a conformation change that triggers signaling via guanine nucleotide-binding proteins (G proteins) and modulates the activity of down-stream effectors, such as adenylate cyclase. Signaling activates adenylate cyclase activity. The polypeptide is 5-hydroxytryptamine receptor 1 (5-HT7) (Drosophila melanogaster (Fruit fly)).